Consider the following 469-residue polypeptide: Sorting and assembly machinery component 50 homolog (469 aa).

The disordered stretch occupies residues 1 to 20; it reads MGTVHARSLEPLPSSGPDFG. The 81-residue stretch at 45–125 folds into the POTRA domain; it reads VVVQHVHFDG…LDVTFEVTEL (81 aa). Lys-255 carries the post-translational modification N6-methyllysine.

Belongs to the SAM50/omp85 family. In terms of assembly, associates with the mitochondrial contact site and cristae organizing system (MICOS) complex, composed of at least MICOS10/MIC10, CHCHD3/MIC19, CHCHD6/MIC25, APOOL/MIC27, IMMT/MIC60, APOO/MIC23/MIC26 and QIL1/MIC13. This complex was also known under the names MINOS or MitOS complex. The MICOS complex associates with mitochondrial outer membrane proteins SAMM50, MTX1 and MTX2 (together described as components of the mitochondrial outer membrane sorting assembly machinery (SAM) complex) and DNAJC11, mitochondrial inner membrane protein TMEM11 and with HSPA9. The MICOS and SAM complexes together with DNAJC11 are part of a large protein complex spanning both membranes termed the mitochondrial intermembrane space bridging (MIB) complex. Interacts with CHCHD3/MIC19. Interacts with ARMC1. (Microbial infection) Interacts with parasite T.gondii RH strain MAF1b1; the interaction is probably indirect and results in the disruption of the MIB complex and the formation of SPOTs (structures positive for outer mitochondrial membrane (OMM)), a cellular response to OMM stress, which leads to the constitutive shedding of OMM vesicles.

It is found in the mitochondrion outer membrane. The protein localises to the cytoplasm. The protein resides in the mitochondrion. In terms of biological role, plays a crucial role in the maintenance of the structure of mitochondrial cristae and the proper assembly of the mitochondrial respiratory chain complexes. Required for the assembly of TOMM40 into the TOM complex. This chain is Sorting and assembly machinery component 50 homolog (SAMM50), found in Homo sapiens (Human).